The primary structure comprises 118 residues: MDFQFTSHLGSIMAKCSMGHEAIANWFNSEVRSDSAKIQTVLQQLQTGKTQQDITLIGTEYSVFINQEEVMVRANNLMLEHDQPLEDDFHYYDEESIAFCGTDDFIHFLQSALAFIQS.

Belongs to the UPF0231 family.

In Pasteurella multocida (strain Pm70), this protein is UPF0231 protein PM0457.